The primary structure comprises 116 residues: Large ribosomal subunit protein uL23 (116 aa).

The protein belongs to the universal ribosomal protein uL23 family. In terms of assembly, part of the 50S ribosomal subunit. Contacts protein L29, and trigger factor when it is bound to the ribosome.

One of the early assembly proteins it binds 23S rRNA. One of the proteins that surrounds the polypeptide exit tunnel on the outside of the ribosome. Forms the main docking site for trigger factor binding to the ribosome. In Psychrobacter arcticus (strain DSM 17307 / VKM B-2377 / 273-4), this protein is Large ribosomal subunit protein uL23.